The sequence spans 164 residues: CB1 cannabinoid receptor-interacting protein 1 (164 aa).

It belongs to the CNRIP family. In terms of assembly, interacts with the cannabinoid receptor CNR1 (via C-terminus). Does not interact with cannabinoid receptor CNR2. In terms of tissue distribution, highly expressed in brain. Also detected in heart, lung, intestine, kidney, testis, spleen, liver and muscle (at protein level).

In terms of biological role, suppresses cannabinoid receptor CNR1-mediated tonic inhibition of voltage-gated calcium channels. This Mus musculus (Mouse) protein is CB1 cannabinoid receptor-interacting protein 1 (Cnrip1).